A 95-amino-acid chain; its full sequence is Small ribosomal subunit protein bS20 (95 aa).

The protein belongs to the bacterial ribosomal protein bS20 family.

Binds directly to 16S ribosomal RNA. This Ehrlichia canis (strain Jake) protein is Small ribosomal subunit protein bS20.